The following is a 468-amino-acid chain: Pentatricopeptide repeat-containing protein At5g46680 (468 aa).

12 PPR repeats span residues 12-46, 47-81, 82-116, 117-152, 153-183, 187-221, 222-256, 257-291, 293-327, 328-362, 363-393, and 394-428; these read STKL…GVLP, DVIT…GIEP, DVTT…GLSP, DMWS…GLVP, GIDT…LKSR, ELMT…GYTP, NAVT…GYTF, DGFA…GTRS, DIVS…GLKP, DDYT…GMQP, SVVT…MEVR, and DEFT…GMKI.

This sequence belongs to the PPR family. P subfamily.

This Arabidopsis thaliana (Mouse-ear cress) protein is Pentatricopeptide repeat-containing protein At5g46680.